We begin with the raw amino-acid sequence, 134 residues long: Cytochrome b5 (134 aa).

At Ala-2 the chain carries N-acetylalanine. N6-acetyllysine is present on residues Lys-7, Lys-10, and Lys-19. The region spanning 9–85 (VKYYTLEEIQ…SKTYIIGELH (77 aa)) is the Cytochrome b5 heme-binding domain. Heme contacts are provided by His-44 and His-68. Residues 109-131 (WWTNWVIPAISALAVALMYRLYM) form a helical membrane-spanning segment.

Belongs to the cytochrome b5 family.

The protein resides in the endoplasmic reticulum membrane. It is found in the microsome membrane. Functionally, cytochrome b5 is a membrane-bound hemoprotein functioning as an electron carrier for several membrane-bound oxygenases. It is also involved in several steps of the sterol biosynthesis pathway, particularly in the C-5 double bond introduction during the C-5 desaturation. This Mus musculus (Mouse) protein is Cytochrome b5 (Cyb5a).